A 475-amino-acid polypeptide reads, in one-letter code: Ribulose bisphosphate carboxylase large chain (475 aa).

A propeptide spanning residues 1-2 (MS) is cleaved from the precursor. Residue P3 is modified to N-acetylproline. K14 carries the N6,N6,N6-trimethyllysine modification. Residues N123 and T173 each contribute to the substrate site. K175 serves as the catalytic Proton acceptor. K177 serves as a coordination point for substrate. Residues K201, D203, and E204 each contribute to the Mg(2+) site. An N6-carboxylysine modification is found at K201. Catalysis depends on H294, which acts as the Proton acceptor. Substrate is bound by residues R295, H327, and S379.

The protein belongs to the RuBisCO large chain family. Type I subfamily. In terms of assembly, heterohexadecamer of 8 large chains and 8 small chains; disulfide-linked. The disulfide link is formed within the large subunit homodimers. It depends on Mg(2+) as a cofactor. The disulfide bond which can form in the large chain dimeric partners within the hexadecamer appears to be associated with oxidative stress and protein turnover.

It localises to the plastid. It is found in the chloroplast. It catalyses the reaction 2 (2R)-3-phosphoglycerate + 2 H(+) = D-ribulose 1,5-bisphosphate + CO2 + H2O. The catalysed reaction is D-ribulose 1,5-bisphosphate + O2 = 2-phosphoglycolate + (2R)-3-phosphoglycerate + 2 H(+). RuBisCO catalyzes two reactions: the carboxylation of D-ribulose 1,5-bisphosphate, the primary event in carbon dioxide fixation, as well as the oxidative fragmentation of the pentose substrate in the photorespiration process. Both reactions occur simultaneously and in competition at the same active site. This chain is Ribulose bisphosphate carboxylase large chain, found in Physcomitrium patens (Spreading-leaved earth moss).